A 1010-amino-acid chain; its full sequence is Outer kinetochore KNL1 complex subunit knl-1 (1010 aa).

9 consecutive repeat copies span residues 85-88 (MDIS), 109-112 (MDMS), 228-231 (MDTS), 255-258 (MDIT), 278-281 (MDIS), 323-326 (MDIT), 346-349 (MDIS), 402-405 (MDIT), and 428-431 (MDIS). The segment at 85 to 431 (MDISESPACT…LQKEDLMDIS (347 aa)) is 9 X 4 AA repeats of M-[D/E]-[I/L/M]-[S/T]. Coiled coils occupy residues 820-915 (RIVE…GLDK) and 956-988 (KALRNVRSNMIALRSEKNALEMKVAEEHEKFAQ).

Component of the KNL1 complex composed of knl-1 and kbp-5. Part of the ten-subunit outer kinetochore KMN network that includes the KNL1, MIS12 and NDC80 complexes. Interacts with the protein phosphatase 1 (PP1) catalytic subunit gsp-1; the interaction is direct. Interacts with the protein phosphatase 1 (PP1) catalytic subunit gsp-2; the interaction is direct. Interacts with the MIS12 complex subunits kbp-1, kbp-2 and mis-12. Interacts with the NDC80 complex components ndc-80 and him-10. Interacts with knl-3. Interacts with kbp-3. Interacts with kbp-4. Interacts with kbp-5.

It is found in the cytoplasm. Its subcellular location is the cell cortex. The protein localises to the chromosome. The protein resides in the centromere. It localises to the kinetochore. Its function is as follows. Acts as a component of the outer kinetochore KNL1 complex that serves as a docking point for spindle assembly checkpoint components and mediates microtubule-kinetochore interactions. Kinetochores, consisting of a centromere-associated inner segment and a microtubule-contacting outer segment, play a crucial role in chromosome segregation by mediating the physical connection between centromeric DNA and spindle microtubules. The outer kinetochore is made up of the ten-subunit KMN network, comprising the MIS12, NDC80 and KNL1 complexes, and auxiliary microtubule-associated components; together they connect the outer kinetochore with the inner kinetochore, bind microtubules, and mediate interactions with mitotic checkpoint proteins that delay anaphase until chromosomes are bioriented on the spindle. Binds the protein phosphatase 1 catalytic subunits gsp-1 and gsp-2, which has a role in delaying formation of load-bearing kinetochore-microtubule attachments. Required for the recruitment of spindle-assembly checkpoint components bub-1 and mdf-1/2 to unattached kinetochores. Binds microtubules which plays a role in silencing of the spindle assembly checkpoint, but not the formation of load-bearing microtubule-kinetochore attachments. Has a role in the correct localization of the spindly-like protein spdl-1 and the RZZ complex that is composed of rod-1, czw-1 and zwl-1 to kinetochores. This Caenorhabditis elegans protein is Outer kinetochore KNL1 complex subunit knl-1 (knl-1).